Here is a 314-residue protein sequence, read N- to C-terminus: 4-hydroxy-3-methylbut-2-enyl diphosphate reductase (314 aa).

Cys-12 serves as a coordination point for [4Fe-4S] cluster. Residues His-41 and His-74 each contribute to the (2E)-4-hydroxy-3-methylbut-2-enyl diphosphate site. Positions 41 and 74 each coordinate dimethylallyl diphosphate. 2 residues coordinate isopentenyl diphosphate: His-41 and His-74. Cys-96 contributes to the [4Fe-4S] cluster binding site. A (2E)-4-hydroxy-3-methylbut-2-enyl diphosphate-binding site is contributed by His-124. Residue His-124 coordinates dimethylallyl diphosphate. His-124 is a binding site for isopentenyl diphosphate. The active-site Proton donor is the Glu-126. Thr-167 provides a ligand contact to (2E)-4-hydroxy-3-methylbut-2-enyl diphosphate. Cys-197 is a binding site for [4Fe-4S] cluster. The (2E)-4-hydroxy-3-methylbut-2-enyl diphosphate site is built by Ser-225, Ser-226, Asn-227, and Ser-269. Residues Ser-225, Ser-226, Asn-227, and Ser-269 each contribute to the dimethylallyl diphosphate site. Isopentenyl diphosphate is bound by residues Ser-225, Ser-226, Asn-227, and Ser-269.

The protein belongs to the IspH family. It depends on [4Fe-4S] cluster as a cofactor.

The enzyme catalyses isopentenyl diphosphate + 2 oxidized [2Fe-2S]-[ferredoxin] + H2O = (2E)-4-hydroxy-3-methylbut-2-enyl diphosphate + 2 reduced [2Fe-2S]-[ferredoxin] + 2 H(+). The catalysed reaction is dimethylallyl diphosphate + 2 oxidized [2Fe-2S]-[ferredoxin] + H2O = (2E)-4-hydroxy-3-methylbut-2-enyl diphosphate + 2 reduced [2Fe-2S]-[ferredoxin] + 2 H(+). It functions in the pathway isoprenoid biosynthesis; dimethylallyl diphosphate biosynthesis; dimethylallyl diphosphate from (2E)-4-hydroxy-3-methylbutenyl diphosphate: step 1/1. Its pathway is isoprenoid biosynthesis; isopentenyl diphosphate biosynthesis via DXP pathway; isopentenyl diphosphate from 1-deoxy-D-xylulose 5-phosphate: step 6/6. Its function is as follows. Catalyzes the conversion of 1-hydroxy-2-methyl-2-(E)-butenyl 4-diphosphate (HMBPP) into a mixture of isopentenyl diphosphate (IPP) and dimethylallyl diphosphate (DMAPP). Acts in the terminal step of the DOXP/MEP pathway for isoprenoid precursor biosynthesis. This Mannheimia succiniciproducens (strain KCTC 0769BP / MBEL55E) protein is 4-hydroxy-3-methylbut-2-enyl diphosphate reductase.